The chain runs to 135 residues: Endoribonuclease YbeY (135 aa).

Positions 94, 98, and 104 each coordinate Zn(2+).

It belongs to the endoribonuclease YbeY family. Zn(2+) is required as a cofactor.

Its subcellular location is the cytoplasm. Its function is as follows. Single strand-specific metallo-endoribonuclease involved in late-stage 70S ribosome quality control and in maturation of the 3' terminus of the 16S rRNA. The protein is Endoribonuclease YbeY of Campylobacter jejuni subsp. jejuni serotype O:2 (strain ATCC 700819 / NCTC 11168).